A 411-amino-acid chain; its full sequence is Serine/threonine transporter SstT (411 aa).

Helical transmembrane passes span Gly-14–Ala-34, Phe-43–Leu-63, Ile-82–Phe-102, Ala-141–Leu-161, Ile-192–Gly-212, Ala-218–Phe-238, Ile-290–Leu-310, Val-330–Ile-350, and Phe-357–Ile-377.

This sequence belongs to the dicarboxylate/amino acid:cation symporter (DAACS) (TC 2.A.23) family.

It is found in the cell inner membrane. It catalyses the reaction L-serine(in) + Na(+)(in) = L-serine(out) + Na(+)(out). The enzyme catalyses L-threonine(in) + Na(+)(in) = L-threonine(out) + Na(+)(out). Its function is as follows. Involved in the import of serine and threonine into the cell, with the concomitant import of sodium (symport system). This is Serine/threonine transporter SstT from Photobacterium profundum (strain SS9).